Here is a 561-residue protein sequence, read N- to C-terminus: Magnesium-chelatase 60 kDa subunit (561 aa).

2 disordered regions span residues 234–268 (PLQE…DPLD) and 298–324 (RAAS…SRKG). The segment covering 237–249 (EAPPPPPPPPEPP) has biased composition (pro residues). Residues 250 to 265 (EPNEGENQQDEQDQID) show a composition bias toward acidic residues. The span at 314–323 (RRGRPLPSRK) shows a compositional bias: basic residues. The region spanning 379–559 (VLIFAVDASG…KMADVLGAAL (181 aa)) is the VWFA domain.

It belongs to the Mg-chelatase subunits D/I family.

The catalysed reaction is protoporphyrin IX + Mg(2+) + ATP + H2O = Mg-protoporphyrin IX + ADP + phosphate + 3 H(+). It functions in the pathway porphyrin-containing compound metabolism; bacteriochlorophyll biosynthesis. Involved in bacteriochlorophyll biosynthesis; introduces a magnesium ion into protoporphyrin IX to yield Mg-protoporphyrin IX. The protein is Magnesium-chelatase 60 kDa subunit (bchD) of Rhodobacter capsulatus (strain ATCC BAA-309 / NBRC 16581 / SB1003).